Here is a 343-residue protein sequence, read N- to C-terminus: tRNA N6-adenosine threonylcarbamoyltransferase (343 aa).

Residues His-111 and His-115 each coordinate Fe cation. Residues 134–138 (LVSGG), Asp-167, Gly-180, and Asn-276 contribute to the substrate site. Fe cation is bound at residue Asp-304.

Belongs to the KAE1 / TsaD family. It depends on Fe(2+) as a cofactor.

It localises to the cytoplasm. The enzyme catalyses L-threonylcarbamoyladenylate + adenosine(37) in tRNA = N(6)-L-threonylcarbamoyladenosine(37) in tRNA + AMP + H(+). Required for the formation of a threonylcarbamoyl group on adenosine at position 37 (t(6)A37) in tRNAs that read codons beginning with adenine. Is involved in the transfer of the threonylcarbamoyl moiety of threonylcarbamoyl-AMP (TC-AMP) to the N6 group of A37, together with TsaE and TsaB. TsaD likely plays a direct catalytic role in this reaction. This is tRNA N6-adenosine threonylcarbamoyltransferase from Chromohalobacter salexigens (strain ATCC BAA-138 / DSM 3043 / CIP 106854 / NCIMB 13768 / 1H11).